A 145-amino-acid polypeptide reads, in one-letter code: Transcriptional regulator MraZ (145 aa).

SpoVT-AbrB domains lie at 7 to 54 and 83 to 126; these read NATN…GPDL and GVFM…QPQA.

The protein belongs to the MraZ family. Forms oligomers.

It is found in the cytoplasm. The protein localises to the nucleoid. This chain is Transcriptional regulator MraZ, found in Rhizobium johnstonii (strain DSM 114642 / LMG 32736 / 3841) (Rhizobium leguminosarum bv. viciae).